The sequence spans 127 residues: Holo-[acyl-carrier-protein] synthase (127 aa).

Mg(2+) is bound by residues Asp8 and Glu60.

This sequence belongs to the P-Pant transferase superfamily. AcpS family. It depends on Mg(2+) as a cofactor.

It is found in the cytoplasm. The catalysed reaction is apo-[ACP] + CoA = holo-[ACP] + adenosine 3',5'-bisphosphate + H(+). Its function is as follows. Transfers the 4'-phosphopantetheine moiety from coenzyme A to a Ser of acyl-carrier-protein. This is Holo-[acyl-carrier-protein] synthase from Marinomonas sp. (strain MWYL1).